A 464-amino-acid chain; its full sequence is Heterogeneous nuclear ribonucleoprotein K (464 aa).

M1 is modified (N-acetylmethionine). The disordered stretch occupies residues 1-37; the sequence is METEQPEETFPNTETNGEFGKRPAEDMEEEQAFKRSR. Positions 1–276 are necessary for interaction with DDX1; it reads METEQPEETF…GRGGRPMPPS (276 aa). The span at 19–37 shows a compositional bias: basic and acidic residues; it reads FGKRPAEDMEEEQAFKRSR. K34 carries the N6-acetyllysine; alternate modification. K34 is covalently cross-linked (Glycyl lysine isopeptide (Lys-Gly) (interchain with G-Cter in SUMO1); alternate). K34 is covalently cross-linked (Glycyl lysine isopeptide (Lys-Gly) (interchain with G-Cter in SUMO2); alternate). S36 bears the Phosphoserine mark. At T39 the chain carries Phosphothreonine. Residues 42-104 form the KH 1 domain; sequence MVELRILLQS…ETIGEILKKI (63 aa). Glycyl lysine isopeptide (Lys-Gly) (interchain with G-Cter in SUMO2) cross-links involve residues K52 and K60. 2 repeat units span residues 54–76 and 59–62. A 2 X 22 AA approximate repeats region spans residues 54-421; it reads AGAVIGKGGK…QIRHESGASI (368 aa). Residues 59 to 407 are 5 X 4 AA repeats of G-X-G-G; that stretch reads GKGGKNIKAL…LAGSIIGKGG (349 aa). Phosphoserine occurs at positions 75 and 116. The region spanning 144-209 is the KH 2 domain; it reads DCELRLLIHQ…DRVVECIKII (66 aa). K163 participates in a covalent cross-link: Glycyl lysine isopeptide (Lys-Gly) (interchain with G-Cter in SUMO1); alternate. K163 is covalently cross-linked (Glycyl lysine isopeptide (Lys-Gly) (interchain with G-Cter in SUMO2); alternate). N6-acetyllysine is present on K198. S214 and S216 each carry phosphoserine. K219 participates in a covalent cross-link: Glycyl lysine isopeptide (Lys-Gly) (interchain with G-Cter in SUMO2); alternate. K219 bears the N6-succinyllysine; alternate mark. Residues 236–273 form an RNA-binding RGG-box region; sequence YGGFTMMFDDRRGRPVGFPMRGRGGFDRMPPGRGGRPM. 3 tandem repeats follow at residues 245–250, 257–260, and 267–270. Residues 245–329 are 2 X 6 AA approximate repeats; sequence DRRGRPVGFP…LMAYDRRGRP (85 aa). A disordered region spans residues 250–329; sequence PVGFPMRGRG…LMAYDRRGRP (80 aa). The span at 252–266 shows a compositional bias: low complexity; sequence GFPMRGRGGFDRMPP. Over residues 276-285 the composition is skewed to basic and acidic residues; the sequence is SRRDYDDMSP. S284 carries the phosphoserine modification. A 3-4 repeat occupies 295–298; it reads GRGG. R316 carries the omega-N-methylarginine modification. One copy of the 2-2 repeat lies at 324–329; it reads DRRGRP. Omega-N-methylarginine is present on R377. S379 carries the post-translational modification Phosphoserine. Y380 is modified (phosphotyrosine). The 65-residue stretch at 387-451 folds into the KH 3 domain; sequence IITTQVTIPK…DQIQNAQYLL (65 aa). 2 tandem repeats follow at residues 399 to 421 and 404 to 407. K405 bears the N6-acetyllysine; alternate mark. A Glycyl lysine isopeptide (Lys-Gly) (interchain with G-Cter in SUMO2); alternate cross-link involves residue K405. The residue at position 420 (S420) is a Phosphoserine. K422 is covalently cross-linked (Glycyl lysine isopeptide (Lys-Gly) (interchain with G-Cter in SUMO1); alternate). A Glycyl lysine isopeptide (Lys-Gly) (interchain with G-Cter in SUMO2); alternate cross-link involves residue K422. K422 participates in a covalent cross-link: Glycyl lysine isopeptide (Lys-Gly) (interchain with G-Cter in SUMO); alternate.

In terms of assembly, identified in the spliceosome C complex. Interacts with ANKRD28, RBM42 and ZIK1. Interacts with DDX1. Interacts with MDM2; this interaction leads to ubiquitination and proteasomal degradation. Interacts with p53/TP53. Interacts with BRDT. Interacts with IVNS1ABP. Interacts with PPIA/CYPA. Part of a transcription inhibitory ribonucleoprotein complex composed at least of the circular RNA circZNF827, ZNF827 and HNRNPL. Sumoylated by CBX4. Sumoylation is increased upon DNA damage, such as that produced by doxorubicin, etoposide, UV light and camptothecin, due to enhanced CBX4 phosphorylation by HIPK2 under these conditions. In terms of processing, ubiquitinated by MDM2. Doxorubicin treatment does not affect monoubiquitination, but slightly decreases HNRNPK poly-ubiquitination. Post-translationally, O-glycosylated (O-GlcNAcylated), in a cell cycle-dependent manner.

Its subcellular location is the cytoplasm. The protein resides in the nucleus. It localises to the nucleoplasm. It is found in the cell projection. The protein localises to the podosome. One of the major pre-mRNA-binding proteins. Binds tenaciously to poly(C) sequences. Likely to play a role in the nuclear metabolism of hnRNAs, particularly for pre-mRNAs that contain cytidine-rich sequences. Can also bind poly(C) single-stranded DNA. Plays an important role in p53/TP53 response to DNA damage, acting at the level of both transcription activation and repression. When sumoylated, acts as a transcriptional coactivator of p53/TP53, playing a role in p21/CDKN1A and 14-3-3 sigma/SFN induction. As far as transcription repression is concerned, acts by interacting with long intergenic RNA p21 (lincRNA-p21), a non-coding RNA induced by p53/TP53. This interaction is necessary for the induction of apoptosis, but not cell cycle arrest. As part of a ribonucleoprotein complex composed at least of ZNF827, HNRNPL and the circular RNA circZNF827 that nucleates the complex on chromatin, may negatively regulate the transcription of genes involved in neuronal differentiation. This is Heterogeneous nuclear ribonucleoprotein K (HNRNPK) from Macaca fascicularis (Crab-eating macaque).